Reading from the N-terminus, the 126-residue chain is Large ribosomal subunit protein uL22 (126 aa).

Belongs to the universal ribosomal protein uL22 family. As to quaternary structure, part of the 50S ribosomal subunit.

In terms of biological role, this protein binds specifically to 23S rRNA; its binding is stimulated by other ribosomal proteins, e.g. L4, L17, and L20. It is important during the early stages of 50S assembly. It makes multiple contacts with different domains of the 23S rRNA in the assembled 50S subunit and ribosome. Functionally, the globular domain of the protein is located near the polypeptide exit tunnel on the outside of the subunit, while an extended beta-hairpin is found that lines the wall of the exit tunnel in the center of the 70S ribosome. The sequence is that of Large ribosomal subunit protein uL22 from Prochlorococcus marinus (strain NATL2A).